Reading from the N-terminus, the 86-residue chain is Large ribosomal subunit protein bL31B (86 aa).

This sequence belongs to the bacterial ribosomal protein bL31 family. Type B subfamily. As to quaternary structure, part of the 50S ribosomal subunit.

The protein is Large ribosomal subunit protein bL31B of Streptococcus uberis (strain ATCC BAA-854 / 0140J).